An 87-amino-acid polypeptide reads, in one-letter code: Phytosulfokines 2 (87 aa).

The N-terminal stretch at 1 to 22 (MANVSALLTIALLLCSTLMCTA) is a signal peptide. The propeptide occupies 23–77 (RPEPAISISITTAADPCNMEKKIEGKLDDMHMVDENCGADDEDCLMRRTLVAHTD). A sulfotyrosine mark is found at Tyr78 and Tyr80. A propeptide spanning residues 83–87 (KKKHP) is cleaved from the precursor.

Belongs to the phytosulfokine family. Sulfation is important for activity and for the binding to a putative membrane receptor. Post-translationally, PSK-beta is an enzymatic derivative of PSK-alpha. In terms of tissue distribution, expressed in stems, roots and leaves.

Its subcellular location is the secreted. In terms of biological role, promotes plant cell differentiation, organogenesis and somatic embryogenesis as well as cell proliferation. The polypeptide is Phytosulfokines 2 (PSK2) (Arabidopsis thaliana (Mouse-ear cress)).